A 761-amino-acid chain; its full sequence is Probable beta-galactosidase 2 (761 aa).

A signal peptide spans 1-23 (MGTIKNNFQLLWLILLIVVLVNG). 2 N-linked (GlcNAc...) asparagine glycosylation sites follow: Asn39 and Asn110. Catalysis depends on Glu195, which acts as the Proton donor. A glycan (N-linked (GlcNAc...) asparagine) is linked at Asn206. The active-site Nucleophile is the Glu267. N-linked (GlcNAc...) asparagine glycans are attached at residues Asn385, Asn405, Asn438, Asn501, Asn552, Asn553, Asn577, Asn592, Asn642, Asn690, and Asn696.

The protein belongs to the glycosyl hydrolase 35 family.

It catalyses the reaction Hydrolysis of terminal non-reducing beta-D-galactose residues in beta-D-galactosides.. In terms of biological role, cleaves beta-linked terminal galactosyl residues from gangliosides, glycoproteins, and glycosaminoglycans. The chain is Probable beta-galactosidase 2 (glb2) from Dictyostelium discoideum (Social amoeba).